The following is a 438-amino-acid chain: Transposon Ty2-B Gag polyprotein (438 aa).

Composition is skewed to polar residues over residues 1-11, 19-39, and 49-60; these read MESQQLHQNPH, ASVT…SASN, and KVNSQQETTPGT. Disordered regions lie at residues 1–88, 364–397, and 419–438; these read MESQ…YQQH, KNVS…AKAH, and SSQY…TERI. Positions 295–397 are RNA-binding; it reads ENNINVSDRL…SSKPRAAKAH (103 aa). Positions 369–381 are enriched in low complexity; sequence TSPNTTNTKVTTR.

In terms of assembly, homotrimer.

It localises to the cytoplasm. Capsid protein (CA) is the structural component of the virus-like particle (VLP), forming the shell that encapsulates the retrotransposons dimeric RNA genome. The particles are assembled from trimer-clustered units and there are holes in the capsid shells that allow for the diffusion of macromolecules. CA also has nucleocapsid-like chaperone activity, promoting primer tRNA(i)-Met annealing to the multipartite primer-binding site (PBS), dimerization of Ty2 RNA and initiation of reverse transcription. This chain is Transposon Ty2-B Gag polyprotein (TY2A-B), found in Saccharomyces cerevisiae (strain ATCC 204508 / S288c) (Baker's yeast).